The chain runs to 243 residues: Carboxy-S-adenosyl-L-methionine synthase (243 aa).

Residues Tyr40, 65–67, 90–91, 118–119, Asn133, and Arg200 each bind S-adenosyl-L-methionine; these read GCS, DN, and DI.

It belongs to the class I-like SAM-binding methyltransferase superfamily. Cx-SAM synthase family. As to quaternary structure, homodimer.

The catalysed reaction is prephenate + S-adenosyl-L-methionine = carboxy-S-adenosyl-L-methionine + 3-phenylpyruvate + H2O. Functionally, catalyzes the conversion of S-adenosyl-L-methionine (SAM) to carboxy-S-adenosyl-L-methionine (Cx-SAM). The protein is Carboxy-S-adenosyl-L-methionine synthase of Shewanella piezotolerans (strain WP3 / JCM 13877).